Here is a 38-residue protein sequence, read N- to C-terminus: Large ribosomal subunit protein bL36 (38 aa).

This sequence belongs to the bacterial ribosomal protein bL36 family.

This Proteus mirabilis (strain HI4320) protein is Large ribosomal subunit protein bL36.